Consider the following 217-residue polypeptide: Protein-L-isoaspartate O-methyltransferase (217 aa).

Ser-64 is an active-site residue.

The protein belongs to the methyltransferase superfamily. L-isoaspartyl/D-aspartyl protein methyltransferase family.

It is found in the cytoplasm. The enzyme catalyses [protein]-L-isoaspartate + S-adenosyl-L-methionine = [protein]-L-isoaspartate alpha-methyl ester + S-adenosyl-L-homocysteine. Functionally, catalyzes the methyl esterification of L-isoaspartyl residues in peptides and proteins that result from spontaneous decomposition of normal L-aspartyl and L-asparaginyl residues. It plays a role in the repair and/or degradation of damaged proteins. This Nitrobacter winogradskyi (strain ATCC 25391 / DSM 10237 / CIP 104748 / NCIMB 11846 / Nb-255) protein is Protein-L-isoaspartate O-methyltransferase.